Reading from the N-terminus, the 188-residue chain is Methionine aminopeptidase (188 aa).

His-60 serves as a coordination point for substrate. A divalent metal cation contacts are provided by Asp-80, Asp-91, and His-164. Substrate is bound at residue His-172.

The protein belongs to the peptidase M24A family. Methionine aminopeptidase archaeal type 2 subfamily. As to quaternary structure, monomer. It depends on Co(2+) as a cofactor. Requires Zn(2+) as cofactor. Mn(2+) serves as cofactor. The cofactor is Fe(2+).

It carries out the reaction Release of N-terminal amino acids, preferentially methionine, from peptides and arylamides.. Its function is as follows. Removes the N-terminal methionine from nascent proteins. The N-terminal methionine is often cleaved when the second residue in the primary sequence is small and uncharged (Met-Ala-, Cys, Gly, Pro, Ser, Thr, or Val). The polypeptide is Methionine aminopeptidase (map) (Methanothermus fervidus).